The sequence spans 337 residues: MYKPQQQQQLFDLQDNNGAAFDNGGTDPSCWLSHENEISRTDSSLSSSNVDPLLFNDLVQIVPLVQSLIDRKEKSSFTRRGSMTYTKMPSRESLYKKTSEVKGRNAGQSTATKKHRDQNKNVSSSQDGYAENFSTPSSTSSLTEKDREELMTLREKVEDLQKKLLEKDELLKEAEILKNEITATNAELDEMKKDISEKDFLVKTTQVQLSDALVKLADKKAAVEKLEWEAMTSSKKVERLQEDLDLLQGEISSFIQFVHALTGNDSRDSAEECNVIPYPWDQNVEIDKLNERDLQKMEAAREAYIAAVAAAKENPDEASLSAASTARSYLQSLVLRT.

Positions 80–147 (RGSMTYTKMP…STSSLTEKDR (68 aa)) are disordered. Residues 89–103 (PSRESLYKKTSEVKG) are compositionally biased toward basic and acidic residues. Residues 120-142 (KNVSSSQDGYAENFSTPSSTSSL) are compositionally biased toward polar residues. Coiled coils occupy residues 143–194 (TEKD…MKKD), 223–250 (VEKL…LQGE), and 294–314 (LQKM…AKEN).

Belongs to the microtubule binding protein 2C family. Interacts with KN-1. Binds to tobacco mosaic virus movement protein (TMV-MP) at microtubules. Constitutively expressed in leaves.

The protein resides in the cytoplasm. It is found in the cytoskeleton. Its function is as follows. Prevents homeodomain proteins (e.g. STM) association to plasmodesmata and, consequently, cell-to-cell transport. Binds to RNA. Alters KN1 RNA-binding capacity. Regulates cytoskeleton (e.g. actin) organization that determinates cell shape. Interferes with cell-to-cell transport of tobacco mosaic virus movement protein (TMV-MP) by mediating its accumulation at microtubules, thus interfering with cell-to-cell virus movement. The sequence is that of Protein MICROTUBULE BINDING PROTEIN 2C from Nicotiana tabacum (Common tobacco).